The following is a 344-amino-acid chain: Selenide, water dikinase (344 aa).

Cys-16 is an active-site residue. Residues Lys-19 and 47–49 (SRD) contribute to the ATP site. Asp-50 is a binding site for Mg(2+). ATP-binding positions include Asp-67, Asp-90, and 138 to 140 (GHS). Residue Asp-90 participates in Mg(2+) binding. Mg(2+) is bound at residue Asp-226.

This sequence belongs to the selenophosphate synthase 1 family. Class I subfamily. As to quaternary structure, homodimer. It depends on Mg(2+) as a cofactor.

The catalysed reaction is hydrogenselenide + ATP + H2O = selenophosphate + AMP + phosphate + 2 H(+). Functionally, synthesizes selenophosphate from selenide and ATP. The protein is Selenide, water dikinase of Pseudomonas putida (strain ATCC 47054 / DSM 6125 / CFBP 8728 / NCIMB 11950 / KT2440).